Here is a 284-residue protein sequence, read N- to C-terminus: Flavin-dependent thymidylate synthase (284 aa).

Residues glycine 27–tyrosine 237 enclose the ThyX domain. FAD is bound by residues threonine 73, arginine 96–arginine 98, and glutamate 104. Residues glutamine 93–arginine 96 and glutamate 104–arginine 108 contribute to the dUMP site. The ThyX motif signature appears at arginine 96–serine 106. The disordered stretch occupies residues glutamate 122–aspartate 142. Polar residues predominate over residues alanine 125–glycine 134. A dUMP-binding site is contributed by arginine 176. Residues aspartate 192–histidine 194 and histidine 198 each bind FAD. Arginine 203 contacts dUMP. The active-site Involved in ionization of N3 of dUMP, leading to its activation is the arginine 203.

Belongs to the thymidylate synthase ThyX family. In terms of assembly, homotetramer. The cofactor is FAD.

It catalyses the reaction dUMP + (6R)-5,10-methylene-5,6,7,8-tetrahydrofolate + NADPH + H(+) = dTMP + (6S)-5,6,7,8-tetrahydrofolate + NADP(+). The protein operates within pyrimidine metabolism; dTTP biosynthesis. Its function is as follows. Catalyzes the reductive methylation of 2'-deoxyuridine-5'-monophosphate (dUMP) to 2'-deoxythymidine-5'-monophosphate (dTMP) while utilizing 5,10-methylenetetrahydrofolate (mTHF) as the methyl donor, and NADPH and FADH(2) as the reductant. The polypeptide is Flavin-dependent thymidylate synthase (Wolbachia pipientis wMel).